A 32-amino-acid chain; its full sequence is uncharacterized protein (32 aa).

This is an uncharacterized protein from Treponema pallidum (strain Nichols).